We begin with the raw amino-acid sequence, 154 residues long: Hemiasterlin resistant protein 1 (154 aa).

Disordered stretches follow at residues 1-64 (MVRR…PGLM) and 86-109 (GMFT…PAGA). 3 stretches are compositionally biased toward low complexity: residues 7 to 28 (ASPS…SSFA), 48 to 57 (TPMGAPMGAP), and 96 to 109 (AEQA…PAGA). The CHCH domain occupies 116–154 (SQPCEFEWRQFVDCAQNQSDVSLCNGFNDIFKQCKARYA). 2 consecutive short sequence motifs (cx9C motif) follow at residues 119–129 (CEFEWRQFVDC) and 139–149 (CNGFNDIFKQC). Disulfide bonds link C119–C149 and C129–C139.

This chain is Hemiasterlin resistant protein 1 (har-1), found in Caenorhabditis elegans.